A 327-amino-acid polypeptide reads, in one-letter code: DNA-directed RNA polymerase subunit alpha (327 aa).

An alpha N-terminal domain (alpha-NTD) region spans residues 1–227 (MLIAHRPTLI…ELFGLARELN (227 aa)). Positions 244–327 (SDEDLRIPIE…GSYFDPNYGS (84 aa)) are alpha C-terminal domain (alpha-CTD).

The protein belongs to the RNA polymerase alpha chain family. As to quaternary structure, homodimer. The RNAP catalytic core consists of 2 alpha, 1 beta, 1 beta' and 1 omega subunit. When a sigma factor is associated with the core the holoenzyme is formed, which can initiate transcription.

The catalysed reaction is RNA(n) + a ribonucleoside 5'-triphosphate = RNA(n+1) + diphosphate. Functionally, DNA-dependent RNA polymerase catalyzes the transcription of DNA into RNA using the four ribonucleoside triphosphates as substrates. The protein is DNA-directed RNA polymerase subunit alpha of Tropheryma whipplei (strain TW08/27) (Whipple's bacillus).